Reading from the N-terminus, the 412-residue chain is Proteasome-activating nucleotidase (412 aa).

Residues 15-72 are a coiled coil; it reads EDLYRYLLERVTNLEDRNTELREQLRQIEADKRYLETQKVRYEREVRKFKGEIEQMKS. Residues 197-202 and histidine 336 each bind ATP; that span reads GTGKTL. The interval 410–412 is docks into pockets in the proteasome alpha-ring to cause gate opening; it reads MFA.

It belongs to the AAA ATPase family. As to quaternary structure, homohexamer. The hexameric complex has a two-ring architecture resembling a top hat that caps the 20S proteasome core at one or both ends. Upon ATP-binding, the C-terminus of PAN interacts with the alpha-rings of the proteasome core by binding to the intersubunit pockets.

The protein localises to the cytoplasm. ATPase which is responsible for recognizing, binding, unfolding and translocation of substrate proteins into the archaeal 20S proteasome core particle. Is essential for opening the gate of the 20S proteasome via an interaction with its C-terminus, thereby allowing substrate entry and access to the site of proteolysis. Thus, the C-termini of the proteasomal ATPase function like a 'key in a lock' to induce gate opening and therefore regulate proteolysis. Unfolding activity requires energy from ATP hydrolysis, whereas ATP binding alone promotes ATPase-20S proteasome association which triggers gate opening, and supports translocation of unfolded substrates. In Methanosphaerula palustris (strain ATCC BAA-1556 / DSM 19958 / E1-9c), this protein is Proteasome-activating nucleotidase.